The primary structure comprises 423 residues: GPI mannosyltransferase 2 (423 aa).

Transmembrane regions (helical) follow at residues 7-27, 102-122, 128-148, 151-171, 191-211, 228-248, 298-318, 333-353, and 400-420; these read LTLI…ILSG, VILG…LVLY, IFNP…PTAT, APYT…LLSI, TGIF…AHIF, FLSA…TETV, LAMP…SHLV, PPPI…LLLF, and YWIG…AGHY.

It belongs to the PIGV family.

The protein localises to the endoplasmic reticulum membrane. The protein operates within glycolipid biosynthesis; glycosylphosphatidylinositol-anchor biosynthesis. Functionally, mannosyltransferase involved in glycosylphosphatidylinositol-anchor biosynthesis. Transfers the second mannose to the glycosylphosphatidylinositol during GPI precursor assembly. The sequence is that of GPI mannosyltransferase 2 (GPI18) from Cryptococcus neoformans var. neoformans serotype D (strain JEC21 / ATCC MYA-565) (Filobasidiella neoformans).